The sequence spans 255 residues: Ornithine decarboxylase antizyme (255 aa).

Belongs to the ODC antizyme family. Interacts with ODC and thereby sterically blocks ODC homodimerization.

Functionally, ornithine decarboxylase (ODC) antizyme protein that negatively regulates ODC activity and intracellular polyamine biosynthesis in response to increased intracellular polyamine levels. Binds to ODC monomers, inhibiting the assembly of the functional ODC homodimer, and targets the monomers for ubiquitin-independent proteolytic destruction by the 26S proteasome. The sequence is that of Ornithine decarboxylase antizyme (OAZ1) from Eremothecium gossypii (strain ATCC 10895 / CBS 109.51 / FGSC 9923 / NRRL Y-1056) (Yeast).